The sequence spans 319 residues: MAKRSKGRPVDGILLLNKPIGISSNKALQQTKGVYFAQKAGHTGALDPLATGMLPICFGEATKFTQFLLDTDKTYVVRAKLGERTTTSDSDGEIVSTKDVNVTREQLIKEIAAFVGESDQYPSMYSALKYQGRPLYKYAREGIEVPRKCRKINVFSLTFDEFDEVNNVIQMTAHVSKGTYIRTIVDDLGEKLGCGAHVVMLHRTAVGQYPAEKMVSLDEIEALLAKAKDEEVAPSTYLDALLLPLDTALVDLPVVEISKEQGSIFSHGQAIDLDIDLPEGAIKVVADGIFIGTGERNASGHLKVKRGLASQQDDYVKPE.

The active-site Nucleophile is aspartate 47.

It belongs to the pseudouridine synthase TruB family. Type 1 subfamily.

It carries out the reaction uridine(55) in tRNA = pseudouridine(55) in tRNA. Responsible for synthesis of pseudouridine from uracil-55 in the psi GC loop of transfer RNAs. This Pseudoalteromonas translucida (strain TAC 125) protein is tRNA pseudouridine synthase B.